A 429-amino-acid polypeptide reads, in one-letter code: Zinc-regulated GTPase metalloprotein activator 1 (429 aa).

The psi-PxLVp motif motif lies at 15 to 22 (GELPCLVT). 78–85 (GYLGSGKS) is a GTP binding site. Residues cysteine 136, cysteine 138, and cysteine 139 each coordinate Zn(2+). The CXCC motif motif lies at 136-139 (CLCC). GTP contacts are provided by residues 139-143 (CSLKN) and 244-247 (NKYD). In terms of domain architecture, CobW C-terminal spans 362-428 (RDWEVQRTKG…SIEELLRKTL (67 aa)).

It belongs to the SIMIBI class G3E GTPase family. ZNG1 subfamily.

The enzyme catalyses GTP + H2O = GDP + phosphate + H(+). In terms of biological role, zinc chaperone that directly transfers zinc cofactor to target metalloproteins, thereby activating them. Catalyzes zinc insertion into the active site of methionine aminopeptidase MAP1, which function to cleave the initiator methionine from polypeptides during or after protein translation. Mechanistically, the N-terminal psi-PxLVp motif binds to the C6H2-type zinc finger of inactive form of MAP1. After formation of the docked complex, zinc is transferred from the CXCC motif in the GTPase domain of ZNG1 to the zinc binding site in the peptidase domain of MAP1 in a process requiring GTP hydrolysis. GTP/GDP exchange is required for release of active MAP1. The protein is Zinc-regulated GTPase metalloprotein activator 1 of Saccharomyces cerevisiae (strain ATCC 204508 / S288c) (Baker's yeast).